The chain runs to 103 residues: Pyrimidine/purine nucleoside phosphorylase (103 aa).

Belongs to the nucleoside phosphorylase PpnP family.

It catalyses the reaction a purine D-ribonucleoside + phosphate = a purine nucleobase + alpha-D-ribose 1-phosphate. The catalysed reaction is adenosine + phosphate = alpha-D-ribose 1-phosphate + adenine. It carries out the reaction cytidine + phosphate = cytosine + alpha-D-ribose 1-phosphate. The enzyme catalyses guanosine + phosphate = alpha-D-ribose 1-phosphate + guanine. It catalyses the reaction inosine + phosphate = alpha-D-ribose 1-phosphate + hypoxanthine. The catalysed reaction is thymidine + phosphate = 2-deoxy-alpha-D-ribose 1-phosphate + thymine. It carries out the reaction uridine + phosphate = alpha-D-ribose 1-phosphate + uracil. The enzyme catalyses xanthosine + phosphate = alpha-D-ribose 1-phosphate + xanthine. Catalyzes the phosphorolysis of diverse nucleosides, yielding D-ribose 1-phosphate and the respective free bases. Can use uridine, adenosine, guanosine, cytidine, thymidine, inosine and xanthosine as substrates. Also catalyzes the reverse reactions. This Methylococcus capsulatus (strain ATCC 33009 / NCIMB 11132 / Bath) protein is Pyrimidine/purine nucleoside phosphorylase.